The chain runs to 346 residues: UDP-3-O-acylglucosamine N-acyltransferase (346 aa).

H240 (proton acceptor) is an active-site residue.

Belongs to the transferase hexapeptide repeat family. LpxD subfamily. In terms of assembly, homotrimer.

The catalysed reaction is a UDP-3-O-[(3R)-3-hydroxyacyl]-alpha-D-glucosamine + a (3R)-hydroxyacyl-[ACP] = a UDP-2-N,3-O-bis[(3R)-3-hydroxyacyl]-alpha-D-glucosamine + holo-[ACP] + H(+). It functions in the pathway bacterial outer membrane biogenesis; LPS lipid A biosynthesis. In terms of biological role, catalyzes the N-acylation of UDP-3-O-acylglucosamine using 3-hydroxyacyl-ACP as the acyl donor. Is involved in the biosynthesis of lipid A, a phosphorylated glycolipid that anchors the lipopolysaccharide to the outer membrane of the cell. The polypeptide is UDP-3-O-acylglucosamine N-acyltransferase (Bacteroides fragilis (strain YCH46)).